The following is a 232-amino-acid chain: Small ribosomal subunit protein uS3 (232 aa).

One can recognise a KH type-2 domain in the interval 39-107 (IRAILHKELK…DVVINIVEIR (69 aa)).

Belongs to the universal ribosomal protein uS3 family. As to quaternary structure, part of the 30S ribosomal subunit. Forms a tight complex with proteins S10 and S14.

Binds the lower part of the 30S subunit head. Binds mRNA in the 70S ribosome, positioning it for translation. The sequence is that of Small ribosomal subunit protein uS3 from Rhodopseudomonas palustris (strain BisA53).